Reading from the N-terminus, the 341-residue chain is tRNA N6-adenosine threonylcarbamoyltransferase (341 aa).

Fe cation is bound by residues His111 and His115. Substrate is bound by residues 134 to 138 (LVSGG), Asp167, Gly180, and Asn276. Asp304 is a binding site for Fe cation.

Belongs to the KAE1 / TsaD family. Fe(2+) is required as a cofactor.

It localises to the cytoplasm. It catalyses the reaction L-threonylcarbamoyladenylate + adenosine(37) in tRNA = N(6)-L-threonylcarbamoyladenosine(37) in tRNA + AMP + H(+). Required for the formation of a threonylcarbamoyl group on adenosine at position 37 (t(6)A37) in tRNAs that read codons beginning with adenine. Is involved in the transfer of the threonylcarbamoyl moiety of threonylcarbamoyl-AMP (TC-AMP) to the N6 group of A37, together with TsaE and TsaB. TsaD likely plays a direct catalytic role in this reaction. The sequence is that of tRNA N6-adenosine threonylcarbamoyltransferase from Pseudomonas syringae pv. syringae (strain B728a).